The primary structure comprises 482 residues: Methylenetetrahydrofolate--tRNA-(uracil-5-)-methyltransferase TrmFO (482 aa).

Residue 20 to 25 (GGGLAG) participates in FAD binding.

This sequence belongs to the MnmG family. TrmFO subfamily. FAD serves as cofactor.

The protein localises to the cytoplasm. The catalysed reaction is uridine(54) in tRNA + (6R)-5,10-methylene-5,6,7,8-tetrahydrofolate + NADH + H(+) = 5-methyluridine(54) in tRNA + (6S)-5,6,7,8-tetrahydrofolate + NAD(+). It catalyses the reaction uridine(54) in tRNA + (6R)-5,10-methylene-5,6,7,8-tetrahydrofolate + NADPH + H(+) = 5-methyluridine(54) in tRNA + (6S)-5,6,7,8-tetrahydrofolate + NADP(+). In terms of biological role, catalyzes the folate-dependent formation of 5-methyl-uridine at position 54 (M-5-U54) in all tRNAs. This Rhodopseudomonas palustris (strain HaA2) protein is Methylenetetrahydrofolate--tRNA-(uracil-5-)-methyltransferase TrmFO.